We begin with the raw amino-acid sequence, 206 residues long: Imidazole glycerol phosphate synthase subunit HisH (206 aa).

The region spanning 5–206 (SVVVLDYGSG…AVLRNWIERL (202 aa)) is the Glutamine amidotransferase type-1 domain. The active-site Nucleophile is cysteine 83. Active-site residues include histidine 187 and glutamate 189.

Heterodimer of HisH and HisF.

It is found in the cytoplasm. It catalyses the reaction 5-[(5-phospho-1-deoxy-D-ribulos-1-ylimino)methylamino]-1-(5-phospho-beta-D-ribosyl)imidazole-4-carboxamide + L-glutamine = D-erythro-1-(imidazol-4-yl)glycerol 3-phosphate + 5-amino-1-(5-phospho-beta-D-ribosyl)imidazole-4-carboxamide + L-glutamate + H(+). It carries out the reaction L-glutamine + H2O = L-glutamate + NH4(+). It functions in the pathway amino-acid biosynthesis; L-histidine biosynthesis; L-histidine from 5-phospho-alpha-D-ribose 1-diphosphate: step 5/9. Functionally, IGPS catalyzes the conversion of PRFAR and glutamine to IGP, AICAR and glutamate. The HisH subunit catalyzes the hydrolysis of glutamine to glutamate and ammonia as part of the synthesis of IGP and AICAR. The resulting ammonia molecule is channeled to the active site of HisF. In Mycolicibacterium paratuberculosis (strain ATCC BAA-968 / K-10) (Mycobacterium paratuberculosis), this protein is Imidazole glycerol phosphate synthase subunit HisH.